Here is a 554-residue protein sequence, read N- to C-terminus: Chaperonin GroEL (554 aa).

ATP contacts are provided by residues 30–33 (TLGP), lysine 51, 87–91 (DGTTT), glycine 415, 478–480 (DAA), and aspartate 494.

The protein belongs to the chaperonin (HSP60) family. In terms of assembly, forms a cylinder of 14 subunits composed of two heptameric rings stacked back-to-back. Interacts with the co-chaperonin GroES.

The protein resides in the cytoplasm. It carries out the reaction ATP + H2O + a folded polypeptide = ADP + phosphate + an unfolded polypeptide.. Functionally, together with its co-chaperonin GroES, plays an essential role in assisting protein folding. The GroEL-GroES system forms a nano-cage that allows encapsulation of the non-native substrate proteins and provides a physical environment optimized to promote and accelerate protein folding. This is Chaperonin GroEL from Pelobacter propionicus (strain DSM 2379 / NBRC 103807 / OttBd1).